Consider the following 115-residue polypeptide: NAD(P)H-quinone oxidoreductase subunit M (115 aa).

This sequence belongs to the complex I NdhM subunit family. As to quaternary structure, NDH-1 can be composed of about 15 different subunits; different subcomplexes with different compositions have been identified which probably have different functions.

Its subcellular location is the cellular thylakoid membrane. It carries out the reaction a plastoquinone + NADH + (n+1) H(+)(in) = a plastoquinol + NAD(+) + n H(+)(out). It catalyses the reaction a plastoquinone + NADPH + (n+1) H(+)(in) = a plastoquinol + NADP(+) + n H(+)(out). NDH-1 shuttles electrons from an unknown electron donor, via FMN and iron-sulfur (Fe-S) centers, to quinones in the respiratory and/or the photosynthetic chain. The immediate electron acceptor for the enzyme in this species is believed to be plastoquinone. Couples the redox reaction to proton translocation, and thus conserves the redox energy in a proton gradient. Cyanobacterial NDH-1 also plays a role in inorganic carbon-concentration. This is NAD(P)H-quinone oxidoreductase subunit M from Trichodesmium erythraeum (strain IMS101).